A 138-amino-acid chain; its full sequence is MSTIVRKLISTANAAKPVAPYNQAVVADRTVYVSGCLGLDKDTMKLVPGGPTEQAQKALENLEAVLKAADSGVDKVIKNTVFLKDLNDFGAVNEVYKRVFNKDFPARSCFQVAKLPMDALVEIECIALTGSVETKTVQ.

Belongs to the RutC family.

Its function is as follows. Molecular chaperone. Seems to fulfill an ATP-independent, HSP70-like function in protein folding. May protect essential factors of cell proliferation during heat shock. No role in calpain activation. This Drosophila melanogaster (Fruit fly) protein is RutC family protein UK114.